Here is a 115-residue protein sequence, read N- to C-terminus: Parathyroid hormone (115 aa).

An N-terminal signal peptide occupies residues 1–25; that stretch reads MMSANTVAKVMIIMLAVCLLTQTDG. Positions 26–31 are excised as a propeptide; sequence KPVRKR. The segment at 51–69 is important for receptor binding; the sequence is RMQWLRRKLQDMHNFVSLG.

This sequence belongs to the parathyroid hormone family. In terms of assembly, interacts with PTH1R (via N-terminal extracellular domain). In terms of tissue distribution, highly expressed in the parathyroid gland. Also expressed in the placenta, thymus and testis.

The protein localises to the secreted. Parathyroid hormone elevates calcium level by dissolving the salts in bone and preventing their renal excretion. Acts by binding to its receptor, PTH1R, activating G protein-coupled receptor signaling. Stimulates [1-14C]-2-deoxy-D-glucose (2DG) transport and glycogen synthesis in osteoblastic cells. In Mus musculus (Mouse), this protein is Parathyroid hormone.